A 688-amino-acid polypeptide reads, in one-letter code: DNA-directed RNA polymerase subunit beta' (688 aa).

C69, C71, C87, and C90 together coordinate Zn(2+). 3 residues coordinate Mg(2+): D489, D491, and D493.

Belongs to the RNA polymerase beta' chain family. RpoC1 subfamily. In terms of assembly, in plastids the minimal PEP RNA polymerase catalytic core is composed of four subunits: alpha, beta, beta', and beta''. When a (nuclear-encoded) sigma factor is associated with the core the holoenzyme is formed, which can initiate transcription. The cofactor is Mg(2+). Zn(2+) serves as cofactor.

The protein localises to the plastid. The protein resides in the chloroplast. The enzyme catalyses RNA(n) + a ribonucleoside 5'-triphosphate = RNA(n+1) + diphosphate. DNA-dependent RNA polymerase catalyzes the transcription of DNA into RNA using the four ribonucleoside triphosphates as substrates. The chain is DNA-directed RNA polymerase subunit beta' from Piper cenocladum (Ant piper).